The sequence spans 215 residues: Probable transaldolase (215 aa).

The active-site Schiff-base intermediate with substrate is Lys-83.

The protein belongs to the transaldolase family. Type 3B subfamily.

Its subcellular location is the cytoplasm. The enzyme catalyses D-sedoheptulose 7-phosphate + D-glyceraldehyde 3-phosphate = D-erythrose 4-phosphate + beta-D-fructose 6-phosphate. The protein operates within carbohydrate degradation; pentose phosphate pathway; D-glyceraldehyde 3-phosphate and beta-D-fructose 6-phosphate from D-ribose 5-phosphate and D-xylulose 5-phosphate (non-oxidative stage): step 2/3. Functionally, transaldolase is important for the balance of metabolites in the pentose-phosphate pathway. The polypeptide is Probable transaldolase (Methanococcus maripaludis (strain DSM 14266 / JCM 13030 / NBRC 101832 / S2 / LL)).